The chain runs to 188 residues: Elongation factor P (188 aa).

The protein belongs to the elongation factor P family.

It localises to the cytoplasm. The protein operates within protein biosynthesis; polypeptide chain elongation. In terms of biological role, involved in peptide bond synthesis. Stimulates efficient translation and peptide-bond synthesis on native or reconstituted 70S ribosomes in vitro. Probably functions indirectly by altering the affinity of the ribosome for aminoacyl-tRNA, thus increasing their reactivity as acceptors for peptidyl transferase. The protein is Elongation factor P of Rhodopseudomonas palustris (strain ATCC BAA-98 / CGA009).